The chain runs to 96 residues: MEQAPADQGPQREPHNEWTLELLEELKQEAVRHFPRIWLHSLGQHIYETYGDTWEGVEAIIRSLQQLLFIHFRIGCQHSRIGITRQRRARNGSSRS.

Positions 1 to 42 (MEQAPADQGPQREPHNEWTLELLEELKQEAVRHFPRIWLHSL) are homooligomerization. A phosphoserine; by host mark is found at Ser-79, Ser-94, and Ser-96.

The protein belongs to the HIV-1 VPR protein family. As to quaternary structure, homooligomer, may form homodimer. Interacts with p6-gag region of the Pr55 Gag precursor protein through a (Leu-X-X)4 motif near the C-terminus of the P6gag protein. Interacts with host UNG. May interact with host RAD23A/HHR23A. Interacts with host VPRBP/DCAF1, leading to hijack the CUL4A-RBX1-DDB1-DCAF1/VPRBP complex, mediating ubiquitination of host proteins such as TERT and ZGPAT and arrest of the cell cycle in G2 phase. In terms of processing, phosphorylated on several residues by host. These phosphorylations regulate VPR activity for the nuclear import of the HIV-1 pre-integration complex.

Its subcellular location is the virion. The protein localises to the host nucleus. It localises to the host extracellular space. Its function is as follows. During virus replication, may deplete host UNG protein, and incude G2-M cell cycle arrest. Acts by targeting specific host proteins for degradation by the 26S proteasome, through association with the cellular CUL4A-DDB1 E3 ligase complex by direct interaction with host VPRPB/DCAF-1. Cell cycle arrest reportedly occurs within hours of infection and is not blocked by antiviral agents, suggesting that it is initiated by the VPR carried into the virion. Additionally, VPR induces apoptosis in a cell cycle dependent manner suggesting that these two effects are mechanistically linked. Detected in the serum and cerebrospinal fluid of AIDS patient, VPR may also induce cell death to bystander cells. During virus entry, plays a role in the transport of the viral pre-integration (PIC) complex to the host nucleus. This function is crucial for viral infection of non-dividing macrophages. May act directly at the nuclear pore complex, by binding nucleoporins phenylalanine-glycine (FG)-repeat regions. In Homo sapiens (Human), this protein is Protein Vpr.